The sequence spans 387 residues: Xylose isomerase (387 aa).

Active-site residues include H54 and D57. Mg(2+) is bound by residues E181, E217, H220, D245, D255, D257, and D287.

It belongs to the xylose isomerase family. As to quaternary structure, homotetramer. The cofactor is Mg(2+).

Its subcellular location is the cytoplasm. The enzyme catalyses alpha-D-xylose = alpha-D-xylulofuranose. The protein is Xylose isomerase of Streptomyces coelicolor (strain ATCC BAA-471 / A3(2) / M145).